Reading from the N-terminus, the 340-residue chain is Glyceraldehyde-3-phosphate dehydrogenase, cytosolic (340 aa).

NAD(+) contacts are provided by residues 16–17 (RI), D38, and R85. Residues 156–158 (SCT), T187, 216–217 (TG), and R239 contribute to the D-glyceraldehyde 3-phosphate site. C157 (nucleophile) is an active-site residue. N321 contributes to the NAD(+) binding site.

This sequence belongs to the glyceraldehyde-3-phosphate dehydrogenase family. As to quaternary structure, homotetramer.

It localises to the cytoplasm. It catalyses the reaction D-glyceraldehyde 3-phosphate + phosphate + NAD(+) = (2R)-3-phospho-glyceroyl phosphate + NADH + H(+). Its pathway is carbohydrate degradation; glycolysis; pyruvate from D-glyceraldehyde 3-phosphate: step 1/5. Key enzyme in glycolysis that catalyzes the first step of the pathway by converting D-glyceraldehyde 3-phosphate (G3P) into 3-phospho-D-glyceroyl phosphate. Essential for the maintenance of cellular ATP levels and carbohydrate metabolism. The chain is Glyceraldehyde-3-phosphate dehydrogenase, cytosolic (GAPC) from Pinus sylvestris (Scotch pine).